The primary structure comprises 53 residues: UPF0391 membrane protein PA5482 (53 aa).

2 consecutive transmembrane segments (helical) span residues 4–24 and 29–49; these read WAITFLIIAIIAAVLGFGGIA and GIAKILFVLFLVLFVVSFFFG.

Belongs to the UPF0391 family.

The protein resides in the cell membrane. In Pseudomonas aeruginosa (strain ATCC 15692 / DSM 22644 / CIP 104116 / JCM 14847 / LMG 12228 / 1C / PRS 101 / PAO1), this protein is UPF0391 membrane protein PA5482.